Reading from the N-terminus, the 464-residue chain is tRNA-2-methylthio-N(6)-dimethylallyladenosine synthase (464 aa).

The region spanning 4-119 (RTFHIMTFGC…APQAIERLVQ (116 aa)) is the MTTase N-terminal domain. Residues Cys13, Cys48, Cys82, Cys158, Cys162, and Cys165 each coordinate [4Fe-4S] cluster. The 232-residue stretch at 144–375 (GEVPVSAYVN…QEVQNEYSEA (232 aa)) folds into the Radical SAM core domain. The TRAM domain occupies 378-461 (QAMVGKTVMV…KHSLTGEPAG (84 aa)). The disordered stretch occupies residues 393-420 (SPKSAAGSGTDAQNAAEESGRTASSWQG).

The protein belongs to the methylthiotransferase family. MiaB subfamily. In terms of assembly, monomer. Requires [4Fe-4S] cluster as cofactor.

The protein localises to the cytoplasm. It catalyses the reaction N(6)-dimethylallyladenosine(37) in tRNA + (sulfur carrier)-SH + AH2 + 2 S-adenosyl-L-methionine = 2-methylsulfanyl-N(6)-dimethylallyladenosine(37) in tRNA + (sulfur carrier)-H + 5'-deoxyadenosine + L-methionine + A + S-adenosyl-L-homocysteine + 2 H(+). Catalyzes the methylthiolation of N6-(dimethylallyl)adenosine (i(6)A), leading to the formation of 2-methylthio-N6-(dimethylallyl)adenosine (ms(2)i(6)A) at position 37 in tRNAs that read codons beginning with uridine. The sequence is that of tRNA-2-methylthio-N(6)-dimethylallyladenosine synthase from Oleidesulfovibrio alaskensis (strain ATCC BAA-1058 / DSM 17464 / G20) (Desulfovibrio alaskensis).